We begin with the raw amino-acid sequence, 122 residues long: Acidic phospholipase A2 homolog vipoxin A chain (122 aa).

7 disulfides stabilise this stretch: C26–C115, C28–C44, C43–C95, C49–C122, C50–C88, C57–C81, and C75–C86.

Belongs to the phospholipase A2 family. Group II subfamily. D49 sub-subfamily. In terms of assembly, heterodimer of A and B (AC P14420) chains; non-covalently linked. The A chain (acidic) is non-toxic, and increases the toxicity of the B chain (basic). The A chain may act as factor stabilizing the complex structure and hence retaining its toxicity by preventing non-specific binding. Upon binding to the target membranes the A chain may dissociate. In terms of tissue distribution, expressed by the venom gland.

Its subcellular location is the secreted. In terms of biological role, heterodimer: postsynaptic neurotoxin. Monomer: Acidic phospholipase A2 homolog that is non-toxic. This Vipera ammodytes meridionalis (Eastern sand viper) protein is Acidic phospholipase A2 homolog vipoxin A chain.